A 375-amino-acid chain; its full sequence is tRNA-specific 2-thiouridylase MnmA (375 aa).

Residues 12 to 19 (GMSGGVDS) and Met-38 contribute to the ATP site. Residues 98–100 (NPD) form an interaction with target base in tRNA region. Cys-103 functions as the Nucleophile in the catalytic mechanism. A disulfide bond links Cys-103 and Cys-200. Position 127 (Gly-127) interacts with ATP. The interval 150 to 152 (KDQ) is interaction with tRNA. Cys-200 (cysteine persulfide intermediate) is an active-site residue. Residues 312–313 (RY) form an interaction with tRNA region.

This sequence belongs to the MnmA/TRMU family.

Its subcellular location is the cytoplasm. It catalyses the reaction S-sulfanyl-L-cysteinyl-[protein] + uridine(34) in tRNA + AH2 + ATP = 2-thiouridine(34) in tRNA + L-cysteinyl-[protein] + A + AMP + diphosphate + H(+). Catalyzes the 2-thiolation of uridine at the wobble position (U34) of tRNA, leading to the formation of s(2)U34. The protein is tRNA-specific 2-thiouridylase MnmA of Lactobacillus gasseri (strain ATCC 33323 / DSM 20243 / BCRC 14619 / CIP 102991 / JCM 1131 / KCTC 3163 / NCIMB 11718 / NCTC 13722 / AM63).